Reading from the N-terminus, the 713-residue chain is Methionine--tRNA ligase (713 aa).

The 'HIGH' region signature appears at 17 to 27 (PYANGPIHIGH). Zn(2+) is bound by residues Cys-149, Cys-152, Cys-162, and Cys-165. Residues 345-349 (KLSTS) carry the 'KMSKS' region motif. Residue Thr-348 participates in ATP binding. The tract at residues 530–564 (VRTSTPDDDPAGAVGWEDAGAPLLPAGHPIPSGPD) is disordered. The 100-residue stretch at 614-713 (DFTQLDLRAG…TEAEDGSVVR (100 aa)) folds into the tRNA-binding domain.

Belongs to the class-I aminoacyl-tRNA synthetase family. MetG type 1 subfamily. As to quaternary structure, homodimer. Zn(2+) is required as a cofactor.

It is found in the cytoplasm. It catalyses the reaction tRNA(Met) + L-methionine + ATP = L-methionyl-tRNA(Met) + AMP + diphosphate. Is required not only for elongation of protein synthesis but also for the initiation of all mRNA translation through initiator tRNA(fMet) aminoacylation. The polypeptide is Methionine--tRNA ligase (Salinibacter ruber (strain DSM 13855 / M31)).